A 95-amino-acid polypeptide reads, in one-letter code: Protein TusB (95 aa).

This sequence belongs to the DsrH/TusB family. In terms of assembly, heterohexamer, formed by a dimer of trimers. The hexameric TusBCD complex contains 2 copies each of TusB, TusC and TusD. The TusBCD complex interacts with TusE.

It is found in the cytoplasm. Functionally, part of a sulfur-relay system required for 2-thiolation of 5-methylaminomethyl-2-thiouridine (mnm(5)s(2)U) at tRNA wobble positions. This chain is Protein TusB, found in Sodalis glossinidius (strain morsitans).